The primary structure comprises 113 residues: Iron-sulfur cluster insertion protein ErpA (113 aa).

Iron-sulfur cluster is bound by residues Cys41, Cys105, and Cys107.

Belongs to the HesB/IscA family. Homodimer. The cofactor is iron-sulfur cluster.

In terms of biological role, required for insertion of 4Fe-4S clusters for at least IspG. The protein is Iron-sulfur cluster insertion protein ErpA of Mannheimia succiniciproducens (strain KCTC 0769BP / MBEL55E).